Consider the following 595-residue polypeptide: ATP-dependent lipid A-core flippase (595 aa).

The disordered stretch occupies residues 1–20 (MSQAYQPDSTKTSAKKSSAV). Positions 9–19 (STKTSAKKSSA) are enriched in low complexity. 4 helical membrane passes run 41–61 (WWAI…EIWI), 81–101 (GLFP…SFLG), 169–189 (VIAL…ILFV), and 266–286 (INTP…VWLA). An ABC transmembrane type-1 domain is found at 45-326 (LLTITGFAIN…LTDVNQQLQR (282 aa)). In terms of domain architecture, ABC transporter spans 357–592 (IKLDNISLVY…HGHYAQMYAR (236 aa)). Residue 390–397 (GRSGAGKS) coordinates ATP.

Belongs to the ABC transporter superfamily. Lipid exporter (TC 3.A.1.106) family. Homodimer.

It is found in the cell inner membrane. It carries out the reaction ATP + H2O + lipid A-core oligosaccharideSide 1 = ADP + phosphate + lipid A-core oligosaccharideSide 2.. Functionally, involved in lipopolysaccharide (LPS) biosynthesis. Translocates lipid A-core from the inner to the outer leaflet of the inner membrane. Transmembrane domains (TMD) form a pore in the inner membrane and the ATP-binding domain (NBD) is responsible for energy generation. This chain is ATP-dependent lipid A-core flippase, found in Psychrobacter arcticus (strain DSM 17307 / VKM B-2377 / 273-4).